The sequence spans 209 residues: Large ribosomal subunit protein uL3 (209 aa).

Positions Thr-133 to Gly-153 are disordered. Gln-150 is modified (N5-methylglutamine).

This sequence belongs to the universal ribosomal protein uL3 family. In terms of assembly, part of the 50S ribosomal subunit. Forms a cluster with proteins L14 and L19. In terms of processing, methylated by PrmB.

Functionally, one of the primary rRNA binding proteins, it binds directly near the 3'-end of the 23S rRNA, where it nucleates assembly of the 50S subunit. This chain is Large ribosomal subunit protein uL3, found in Pectobacterium atrosepticum (strain SCRI 1043 / ATCC BAA-672) (Erwinia carotovora subsp. atroseptica).